The chain runs to 188 residues: Thymidine kinase (188 aa).

17–24 contributes to the ATP binding site; that stretch reads GPMFAGKT. Glu92 functions as the Proton acceptor in the catalytic mechanism. Residue Phe121 coordinates substrate. Residues Cys146 and Cys149 each contribute to the Zn(2+) site. 166-170 lines the substrate pocket; the sequence is LILAG. Residues Cys179 and Cys182 each contribute to the Zn(2+) site.

Belongs to the thymidine kinase family.

The catalysed reaction is thymidine + ATP = dTMP + ADP + H(+). In terms of biological role, phosphorylates thymidine. ASFV replicates in the cytoplasm of infected cells and contains genes encoding a number of enzymes needed for DNA synthesis, including thymidine kinase. Important for growth in swine macrophages in vitro and is a virus virulence factor in swine. This is Thymidine kinase from Ornithodoros (relapsing fever ticks).